We begin with the raw amino-acid sequence, 355 residues long: Peptide chain release factor 1 (355 aa).

Gln230 carries the N5-methylglutamine modification.

This sequence belongs to the prokaryotic/mitochondrial release factor family. Post-translationally, methylated by PrmC. Methylation increases the termination efficiency of RF1.

Its subcellular location is the cytoplasm. Its function is as follows. Peptide chain release factor 1 directs the termination of translation in response to the peptide chain termination codons UAG and UAA. This chain is Peptide chain release factor 1, found in Geobacter metallireducens (strain ATCC 53774 / DSM 7210 / GS-15).